The chain runs to 166 residues: Phospholipase A2 inhibitor A1 (166 aa).

An N-terminal signal peptide occupies residues 1–19 (MRLILLSGLLLLGIFLANG). A C-type lectin domain is found at 46 to 161 (LKGSFLIVHK…CDDNLLVVCE (116 aa)). Disulfide bonds link Cys83–Cys160 and Cys138–Cys152. Asn122 is a glycosylation site (N-linked (GlcNAc...) asparagine).

The protein belongs to the alpha-type phospholipase A2 inhibitor family. As to quaternary structure, homotrimer; non-covalently linked. As to expression, expressed by the liver.

The protein localises to the secreted. In terms of biological role, this phospholipase A2 inhibitor binds directly phospholipase A2 in the presence or absence of calcium. In Bothrops neuwiedi (Neuwied's lancehead), this protein is Phospholipase A2 inhibitor A1.